A 151-amino-acid polypeptide reads, in one-letter code: UPF0756 membrane protein Dred_1097 (151 aa).

The next 4 membrane-spanning stretches (helical) occupy residues 6–26, 52–72, 75–95, and 111–131; these read IILL…LATA, VGLI…NIVY, LVMK…TLAT, and LIFG…GIPI.

This sequence belongs to the UPF0756 family.

It is found in the cell membrane. This Desulforamulus reducens (strain ATCC BAA-1160 / DSM 100696 / MI-1) (Desulfotomaculum reducens) protein is UPF0756 membrane protein Dred_1097.